A 159-amino-acid polypeptide reads, in one-letter code: Ribosomal RNA large subunit methyltransferase H (159 aa).

S-adenosyl-L-methionine-binding positions include L76, G108, and 127-132; that span reads FSKMTF.

It belongs to the RNA methyltransferase RlmH family. Homodimer.

It localises to the cytoplasm. The catalysed reaction is pseudouridine(1915) in 23S rRNA + S-adenosyl-L-methionine = N(3)-methylpseudouridine(1915) in 23S rRNA + S-adenosyl-L-homocysteine + H(+). Specifically methylates the pseudouridine at position 1915 (m3Psi1915) in 23S rRNA. The polypeptide is Ribosomal RNA large subunit methyltransferase H (Clostridium botulinum (strain Langeland / NCTC 10281 / Type F)).